The following is a 103-amino-acid chain: Large ribosomal subunit protein bL21 (103 aa).

This sequence belongs to the bacterial ribosomal protein bL21 family. In terms of assembly, part of the 50S ribosomal subunit. Contacts protein L20.

In terms of biological role, this protein binds to 23S rRNA in the presence of protein L20. This is Large ribosomal subunit protein bL21 from Aeromonas salmonicida (strain A449).